Here is a 200-residue protein sequence, read N- to C-terminus: Ras-related protein Rab-10 (200 aa).

The GTP site is built by serine 18, glycine 19, valine 20, glycine 21, lysine 22, threonine 23, cysteine 24, asparagine 35, threonine 36, serine 40, and threonine 41. Threonine 23 lines the Mg(2+) pocket. 2 consecutive short sequence motifs (switch) follow at residues aspartate 32–phenylalanine 46 and aspartate 64–glycine 81. Residues threonine 41 and aspartate 64 each coordinate Mg(2+). GTP is bound by residues glycine 67, asparagine 122, lysine 123, aspartate 125, methionine 126, serine 152, alanine 153, and lysine 154. The tract at residues arginine 181–serine 200 is disordered. Residues cysteine 198 and cysteine 199 are each lipidated (S-geranylgeranyl cysteine).

This sequence belongs to the small GTPase superfamily. Rab family. It depends on Mg(2+) as a cofactor.

Its subcellular location is the cytoplasmic vesicle membrane. It is found in the golgi apparatus. It localises to the trans-Golgi network membrane. The protein localises to the endosome membrane. The protein resides in the recycling endosome membrane. Its subcellular location is the cytoplasmic vesicle. It is found in the phagosome membrane. It localises to the cell projection. The protein localises to the cilium. The protein resides in the endoplasmic reticulum membrane. The enzyme catalyses GTP + H2O = GDP + phosphate + H(+). With respect to regulation, regulated by guanine nucleotide exchange factors (GEFs) which promote the exchange of bound GDP for free GTP. Regulated by GTPase activating proteins (GAPs) which increase the GTP hydrolysis activity. Inhibited by GDP dissociation inhibitors (GDIs) which prevent Rab-GDP dissociation. Its function is as follows. The small GTPases Rab are key regulators of intracellular membrane trafficking, from the formation of transport vesicles to their fusion with membranes. Rabs cycle between an inactive GDP-bound form and an active GTP-bound form that is able to recruit to membranes different set of downstream effectors directly responsible for vesicle formation, movement, tethering and fusion. That Rab is mainly involved in the biosynthetic transport of proteins from the Golgi to the plasma membrane. Also plays a specific role in asymmetric protein transport to the plasma membrane within the polarized neuron and epithelial cells. In neurons, it is involved in axonogenesis through regulation of vesicular membrane trafficking toward the axonal plasma membrane while in epithelial cells, it regulates transport from the Golgi to the basolateral membrane. Moreover, may play a role in the basolateral recycling pathway and in phagosome maturation. Finally, may play a role in endoplasmic reticulum dynamics and morphology controlling tubulation along microtubules and tubules fusion. May participate in the export of neosynthesized proteins through a Rab-dependent endosomal export route. The polypeptide is Ras-related protein Rab-10 (Diplobatis ommata (Ocellated electric ray)).